Reading from the N-terminus, the 484-residue chain is Zinc metalloproteinase homolog-disintegrin albolatin (484 aa).

Positions 1 to 20 (MIQVLLVTICLAVFPYQGSS) are cleaved as a signal peptide. A propeptide spanning residues 21–191 (IILESGNVND…KTSQLNLPLL (171 aa)) is cleaved from the precursor. N-linked (GlcNAc...) asparagine glycans are attached at residues Asn80, Asn251, and Asn301. The Peptidase M12B domain maps to 194–392 (RCIELVMVAD…WTSYCLYNEP (199 aa)). 10 cysteine pairs are disulfide-bonded: Cys305-Cys387, Cys345-Cys369, Cys347-Cys352, Cys403-Cys422, Cys414-Cys432, Cys416-Cys427, Cys426-Cys449, Cys440-Cys446, Cys445-Cys470, and Cys458-Cys477. Residues 400–484 (PPVCGNYYLE…GDCPWIGYYG (85 aa)) enclose the Disintegrin domain. The Cell attachment site; atypical (KGD) signature appears at 462-464 (KGD).

The protein belongs to the venom metalloproteinase (M12B) family. P-II subfamily. P-IIb sub-subfamily. In terms of assembly, homodimer; disulfide-linked (disintegrin). Expressed by the venom gland.

It localises to the secreted. The function of this complete protein has not been studied, but it may be similar to the function of the disintegrin domain. A recombinant protein of this domain (409-484) inhibits collagen-induced human platelet aggregation, without having effect on ADP-induced aggregation. It may act either by blocking the binding of fibrinogen to the platelet receptor GPIIb/GPIIIa (ITGA2B/ITGB3) or by blocking the binding of collagen to the integrin alpha-2/beta-1 complex (ITGA2/ITGB1). The chain is Zinc metalloproteinase homolog-disintegrin albolatin from Trimeresurus albolabris (White-lipped pit viper).